We begin with the raw amino-acid sequence, 1132 residues long: Ubiquitin carboxyl-terminal hydrolase 43 (1132 aa).

Residues 1–103 (MDPGVGNALG…GARPPGAQGL (103 aa)) form a disordered region. Residues 17-28 (RPRRRRSLRRLL) show a composition bias toward basic residues. Low complexity-rich tracts occupy residues 29 to 44 (NRFL…SGDS) and 63 to 78 (FACA…GSPG). Residues 101 to 710 (QGLKNHGNTC…GAYILFYQKR (610 aa)) form the USP domain. Cys-110 functions as the Nucleophile in the catalytic mechanism. Residue His-668 is the Proton acceptor of the active site. Arg-746 carries the post-translational modification Asymmetric dimethylarginine. Disordered stretches follow at residues 839–891 (RRRP…TGVP), 935–1008 (TVMP…RGQG), 1024–1044 (RTVR…SDRL), and 1057–1106 (RESP…GEQI). The segment covering 941–950 (GDEKPARPEG) has biased composition (basic and acidic residues). The segment covering 958–967 (GSSQVGSQSS) has biased composition (low complexity). Ser-970 is subject to Phosphoserine. Residues 994-1006 (AAMEERAPDKDRG) are compositionally biased toward basic and acidic residues.

The protein belongs to the peptidase C19 family.

The enzyme catalyses Thiol-dependent hydrolysis of ester, thioester, amide, peptide and isopeptide bonds formed by the C-terminal Gly of ubiquitin (a 76-residue protein attached to proteins as an intracellular targeting signal).. In terms of biological role, may recognize and hydrolyze the peptide bond at the C-terminal Gly of ubiquitin. Involved in the processing of poly-ubiquitin precursors as well as that of ubiquitinated proteins. The chain is Ubiquitin carboxyl-terminal hydrolase 43 (Usp43) from Mus musculus (Mouse).